The primary structure comprises 337 residues: Cholinesterase 2 (337 aa).

Serine 99 (acyl-ester intermediate) is an active-site residue. Cysteines 153 and 165 form a disulfide. Glutamate 224 serves as the catalytic Charge relay system. An N-linked (GlcNAc...) asparagine glycan is attached at asparagine 290.

This sequence belongs to the type-B carboxylesterase/lipase family.

The enzyme catalyses an acylcholine + H2O = a carboxylate + choline + H(+). This Branchiostoma lanceolatum (Common lancelet) protein is Cholinesterase 2 (CHE2).